Reading from the N-terminus, the 123-residue chain is Protein Wnt-7 (123 aa).

Ser1 is lipidated: O-palmitoleoyl serine; by PORCN. Cys89 and Cys104 are joined by a disulfide. An N-linked (GlcNAc...) asparagine glycan is attached at Asn90.

Belongs to the Wnt family. In terms of processing, palmitoleoylation is required for efficient binding to frizzled receptors. Depalmitoleoylation leads to Wnt signaling pathway inhibition.

Its subcellular location is the secreted. It localises to the extracellular space. It is found in the extracellular matrix. Ligand for members of the frizzled family of seven transmembrane receptors. Probable developmental protein. May be a signaling molecule which affects the development of discrete regions of tissues. Is likely to signal over only few cell diameters. This Evasterias troschelii (Mottled sea star) protein is Protein Wnt-7 (WNT-7).